A 566-amino-acid polypeptide reads, in one-letter code: E3 ubiquitin-protein ligase Rnf220 (566 aa).

A Glycyl lysine isopeptide (Lys-Gly) (interchain with G-Cter in SUMO2) cross-link involves residue K277. Positions 277–300 (KREGDSPTASPHSSATEDLHHSDR) are disordered. Residues 291–300 (ATEDLHHSDR) are compositionally biased toward basic and acidic residues. S390 is modified (phosphoserine). Residues 485-513 (EESAVTTFEALKARVRELERQLSRGDRYK) are a coiled coil. The tract at residues 514 to 522 (CLICMDSYS) is required for targeting to the cytoplasm. The RING-type zinc-finger motif lies at 514-553 (CLICMDSYSMPLTSIQCWHVHCEECWLRTLGAKKLCPQCN).

Interacts with SIN3B. Interacts with CTNNB1 (via Armadillo repeats 2-8). Interacts with USP7 (via MATH domain). In terms of processing, auto-ubiquitinated; leads to proteasomal degradation. In the brain, expressed in the hippocampus, telenecephalon and cerebellum. No expression in astro glial cells or in neural progenitor cells.

It localises to the cytoplasm. Its subcellular location is the nucleus. The enzyme catalyses S-ubiquitinyl-[E2 ubiquitin-conjugating enzyme]-L-cysteine + [acceptor protein]-L-lysine = [E2 ubiquitin-conjugating enzyme]-L-cysteine + N(6)-ubiquitinyl-[acceptor protein]-L-lysine.. It participates in protein modification; protein ubiquitination. Its function is as follows. E3 ubiquitin-protein ligase that promotes the ubiquitination and proteasomal degradation of SIN3B. Independently of its E3 ligase activity, acts as a CTNNB1 stabilizer through USP7-mediated deubiquitination of CTNNB1 and promotes Wnt signaling. Plays a critical role in the regulation of nuclear lamina. In Mus musculus (Mouse), this protein is E3 ubiquitin-protein ligase Rnf220 (Rnf220).